We begin with the raw amino-acid sequence, 102 residues long: Glutaredoxin (102 aa).

The region spanning 3-102 is the Glutaredoxin domain; it reads MTKTKELVSS…VPLLTEAGAV (100 aa). An intrachain disulfide couples Cys-23 to Cys-26.

It belongs to the glutaredoxin family. CPYC subfamily.

Its subcellular location is the cytoplasm. Its function is as follows. Has a glutathione-disulfide oxidoreductase activity in the presence of NADPH and glutathione reductase. Reduces low molecular weight disulfides and proteins. This is Glutaredoxin from Ricinus communis (Castor bean).